An 821-amino-acid chain; its full sequence is Palmitoyltransferase AKR1 (821 aa).

A disordered region spans residues 1-118; the sequence is MVDKDANNEL…KDTASRKSMD (118 aa). At 1 to 400 the chain is on the cytoplasmic side; that stretch reads MVDKDANNEL…TIYLNPKIGK (400 aa). Basic and acidic residues predominate over residues 93 to 117; it reads IQDESVNDKTSEPDENKDTASRKSM. ANK repeat units follow at residues 142-172, 176-205, 213-243, 247-277, 289-318, and 322-351; these read PSLH…KAND, DGIT…SKAD, LKAS…DPTL, QSYN…STST, CDRT…DVSK, and NLFI…NIFA. The chain crosses the membrane as a helical span at residues 401–421; sequence LVTFFTPYIILPIMFQVCSFY. Position 422 (asparagine 422) is a topological domain, lumenal. Residues 423–443 form a helical membrane-spanning segment; that stretch reads GFVIPKLFFSVVLFAGSIYIL. Over 444–463 the chain is Cytoplasmic; it reads QKLVIPTYLAEEKAIPKSPL. The chain crosses the membrane as a helical span at residues 464-484; that stretch reads LAGIFSGTAFWCIVTWAFNII. Topologically, residues 485 to 494 are lumenal; it reads PTLLFKKFIS. A helical transmembrane segment spans residues 495–515; it reads NLVLSAFIYLFVWSFFKAMFI. The Cytoplasmic segment spans residues 516 to 589; the sequence is NPGYVPVPSD…YNDIGVRNHK (74 aa). The region spanning 546 to 596 is the DHHC domain; that stretch reads NFCVNTFVRKPLRSKYSRFNKKLIARFDHYCPWVYNDIGVRNHKLFVVFVY. The S-palmitoyl cysteine intermediate role is filled by cysteine 576. Residues 590 to 610 form a helical membrane-spanning segment; that stretch reads LFVVFVYSLNLAVLLFTHLSI. Over 611–650 the chain is Lumenal; sequence KLFKNTEKMSGYDSDDESQKCWLLSDELCVGYKSHHFQFN. The chain crosses the membrane as a helical span at residues 651–671; the sequence is LMLWCLIQYIWIAFLCLVQTF. Over 672–821 the chain is Cytoplasmic; sequence QILKGLTTWE…YPPKLADVDA (150 aa).

The protein belongs to the DHHC palmitoyltransferase family. AKR/ZDHHC17 subfamily.

Its subcellular location is the early endosome membrane. The protein localises to the golgi apparatus membrane. The catalysed reaction is L-cysteinyl-[protein] + hexadecanoyl-CoA = S-hexadecanoyl-L-cysteinyl-[protein] + CoA. Palmitoyltransferase specific for casein kinase 1. The sequence is that of Palmitoyltransferase AKR1 (AKR1) from Debaryomyces hansenii (strain ATCC 36239 / CBS 767 / BCRC 21394 / JCM 1990 / NBRC 0083 / IGC 2968) (Yeast).